A 354-amino-acid chain; its full sequence is tRNA-specific 2-thiouridylase MnmA (354 aa).

Residues 7–14 and M33 contribute to the ATP site; that span reads AMSGGVDS. C94 serves as the catalytic Nucleophile. C94 and C192 form a disulfide bridge. Position 118 (G118) interacts with ATP. The interval 141 to 143 is interaction with tRNA; that stretch reads KDQ. C192 functions as the Cysteine persulfide intermediate in the catalytic mechanism. Residues 296-297 are interaction with tRNA; sequence RY.

This sequence belongs to the MnmA/TRMU family.

It localises to the cytoplasm. The enzyme catalyses S-sulfanyl-L-cysteinyl-[protein] + uridine(34) in tRNA + AH2 + ATP = 2-thiouridine(34) in tRNA + L-cysteinyl-[protein] + A + AMP + diphosphate + H(+). In terms of biological role, catalyzes the 2-thiolation of uridine at the wobble position (U34) of tRNA, leading to the formation of s(2)U34. This Trichlorobacter lovleyi (strain ATCC BAA-1151 / DSM 17278 / SZ) (Geobacter lovleyi) protein is tRNA-specific 2-thiouridylase MnmA.